Consider the following 130-residue polypeptide: Fluoride-specific ion channel FluC (130 aa).

The next 4 membrane-spanning stretches (helical) occupy residues 1–21 (MGEI…RYGL), 36–56 (GTLI…QWGF), 65–85 (LKLM…TFSY), and 103–123 (ILAN…LGSL). Positions 75 and 78 each coordinate Na(+).

This sequence belongs to the fluoride channel Fluc/FEX (TC 1.A.43) family.

It localises to the cell membrane. It carries out the reaction fluoride(in) = fluoride(out). Its activity is regulated as follows. Na(+) is not transported, but it plays an essential structural role and its presence is essential for fluoride channel function. Functionally, fluoride-specific ion channel. Important for reducing fluoride concentration in the cell, thus reducing its toxicity. This Dehalococcoides mccartyi (strain ATCC BAA-2266 / KCTC 15142 / 195) (Dehalococcoides ethenogenes (strain 195)) protein is Fluoride-specific ion channel FluC.